We begin with the raw amino-acid sequence, 433 residues long: Phosphomethylpyrimidine synthase 1 (433 aa).

Residues Asn-66, Met-94, Tyr-123, His-162, 184–186 (SRG), 225–228 (DALR), and Glu-264 contribute to the substrate site. Zn(2+) is bound at residue His-268. Tyr-291 contacts substrate. Residue His-332 participates in Zn(2+) binding. Positions 408, 411, and 415 each coordinate [4Fe-4S] cluster.

It belongs to the ThiC family. [4Fe-4S] cluster is required as a cofactor.

It catalyses the reaction 5-amino-1-(5-phospho-beta-D-ribosyl)imidazole + S-adenosyl-L-methionine = 4-amino-2-methyl-5-(phosphooxymethyl)pyrimidine + CO + 5'-deoxyadenosine + formate + L-methionine + 3 H(+). It functions in the pathway cofactor biosynthesis; thiamine diphosphate biosynthesis. Catalyzes the synthesis of the hydroxymethylpyrimidine phosphate (HMP-P) moiety of thiamine from aminoimidazole ribotide (AIR) in a radical S-adenosyl-L-methionine (SAM)-dependent reaction. In Saccharolobus solfataricus (strain ATCC 35092 / DSM 1617 / JCM 11322 / P2) (Sulfolobus solfataricus), this protein is Phosphomethylpyrimidine synthase 1.